Here is a 153-residue protein sequence, read N- to C-terminus: Large ribosomal subunit protein uL22 (153 aa).

Residues 125 to 153 (EPKEARQARKKAKSGRPAAAAKSETEKGA) are disordered.

This sequence belongs to the universal ribosomal protein uL22 family. As to quaternary structure, part of the 50S ribosomal subunit.

Functionally, this protein binds specifically to 23S rRNA; its binding is stimulated by other ribosomal proteins, e.g. L4, L17, and L20. It is important during the early stages of 50S assembly. It makes multiple contacts with different domains of the 23S rRNA in the assembled 50S subunit and ribosome. The globular domain of the protein is located near the polypeptide exit tunnel on the outside of the subunit, while an extended beta-hairpin is found that lines the wall of the exit tunnel in the center of the 70S ribosome. This chain is Large ribosomal subunit protein uL22, found in Cutibacterium acnes (strain DSM 16379 / KPA171202) (Propionibacterium acnes).